Reading from the N-terminus, the 457-residue chain is Siroheme synthase (457 aa).

The precorrin-2 dehydrogenase /sirohydrochlorin ferrochelatase stretch occupies residues 1–204 (MDHLPIFCQL…NDQKAITETT (204 aa)). NAD(+) is bound by residues 22–23 (DV) and 43–44 (LA). Phosphoserine is present on serine 128. The interval 216–457 (GEVVLVGAGP…RDKLNWFSNH (242 aa)) is uroporphyrinogen-III C-methyltransferase. Proline 225 contributes to the S-adenosyl-L-methionine binding site. The active-site Proton acceptor is the aspartate 248. Lysine 270 functions as the Proton donor in the catalytic mechanism. S-adenosyl-L-methionine-binding positions include 301–303 (GGD), isoleucine 306, 331–332 (TA), methionine 382, and glycine 411.

It in the N-terminal section; belongs to the precorrin-2 dehydrogenase / sirohydrochlorin ferrochelatase family. The protein in the C-terminal section; belongs to the precorrin methyltransferase family.

It catalyses the reaction uroporphyrinogen III + 2 S-adenosyl-L-methionine = precorrin-2 + 2 S-adenosyl-L-homocysteine + H(+). The catalysed reaction is precorrin-2 + NAD(+) = sirohydrochlorin + NADH + 2 H(+). It carries out the reaction siroheme + 2 H(+) = sirohydrochlorin + Fe(2+). Its pathway is cofactor biosynthesis; adenosylcobalamin biosynthesis; precorrin-2 from uroporphyrinogen III: step 1/1. The protein operates within cofactor biosynthesis; adenosylcobalamin biosynthesis; sirohydrochlorin from precorrin-2: step 1/1. It functions in the pathway porphyrin-containing compound metabolism; siroheme biosynthesis; precorrin-2 from uroporphyrinogen III: step 1/1. It participates in porphyrin-containing compound metabolism; siroheme biosynthesis; siroheme from sirohydrochlorin: step 1/1. Its pathway is porphyrin-containing compound metabolism; siroheme biosynthesis; sirohydrochlorin from precorrin-2: step 1/1. Multifunctional enzyme that catalyzes the SAM-dependent methylations of uroporphyrinogen III at position C-2 and C-7 to form precorrin-2 via precorrin-1. Then it catalyzes the NAD-dependent ring dehydrogenation of precorrin-2 to yield sirohydrochlorin. Finally, it catalyzes the ferrochelation of sirohydrochlorin to yield siroheme. This chain is Siroheme synthase, found in Escherichia coli (strain 55989 / EAEC).